Consider the following 153-residue polypeptide: Ribosome maturation factor RimP (153 aa).

It belongs to the RimP family.

It localises to the cytoplasm. Required for maturation of 30S ribosomal subunits. The chain is Ribosome maturation factor RimP from Actinobacillus pleuropneumoniae serotype 5b (strain L20).